Here is a 190-residue protein sequence, read N- to C-terminus: MRLPLLVSVGVLLVALLPSPPCRALLSRGPIPGARQASQHPQPLSFFQPLPQPQEPQALPTLLRVGEEYFLRLGNLDETRAAPLSPAASPLASRSSSRLSPDKVAANFFRALLQPRRPLDSPAGPAKRGTENALGSRQEAPAARKRRSQEPPISLDLTFHLLREVLEMTKADQLAQQAHSNRKLLDIAGK.

The first 24 residues, 1–24 (MRLPLLVSVGVLLVALLPSPPCRA), serve as a signal peptide directing secretion. Positions 25–147 (LLSRGPIPGA…QEAPAARKRR (123 aa)) are excised as a propeptide. Disordered regions lie at residues 33–53 (GARQ…LPQP) and 115–151 (PRRP…SQEP). A compositionally biased stretch (low complexity) spans 41–53 (PQPLSFFQPLPQP). At alanine 188 the chain carries Alanine amide.

The protein belongs to the sauvagine/corticotropin-releasing factor/urotensin I family. As to quaternary structure, interacts (via C-terminus) with CRFR1 (via N-terminal extracellular domain). As to expression, produced by the hypothalamus.

Its subcellular location is the secreted. Hormone regulating the release of corticotropin from pituitary gland. Induces NLRP6 in intestinal epithelial cells, hence may influence gut microbiota profile. In Ovis aries (Sheep), this protein is Corticoliberin (CRH).